The chain runs to 494 residues: Keratin, type I cytoskeletal 12 (494 aa).

Residues 1 to 12 (MDLSNNTMSLSV) show a composition bias toward polar residues. The interval 1-32 (MDLSNNTMSLSVRTPGLSRRLSSQSVIGRPRG) is disordered. Residues 1–124 (MDLSNNTMSL…GNDGGLLSGS (124 aa)) form a head region. The tract at residues 125 to 160 (EKETMQNLNDRLASYLDKVRALEEANTELENKIREW) is coil 1A. The 316-residue stretch at 125–440 (EKETMQNLND…RLLDGEAQGD (316 aa)) folds into the IF rod domain. The segment at 164-182 (RGTGTADASQSDYSKYYPL) is linker 1. The segment at 183–274 (IEDLRNKIIS…KNHEDELQSF (92 aa)) is coil 1B. The segment at 275–297 (RVGGPGEVSVEMDAAPGVDLTRL) is linker 12. Residues 298–435 (LNDMRAQYET…IETYRRLLDG (138 aa)) are coil 2. The tract at residues 436 to 494 (EAQGDGLEESLFVTDSKSQAQSTDSSKDPTKTRKIKTVVQEMVNGEVVSSQVQEIEELM) is tail. The segment at 446–468 (LFVTDSKSQAQSTDSSKDPTKTR) is disordered. A compositionally biased stretch (polar residues) spans 448–459 (VTDSKSQAQSTD).

This sequence belongs to the intermediate filament family. As to quaternary structure, heterotetramer of two type I and two type II keratins. Keratin-3 associates with keratin-12. In terms of tissue distribution, expressed in the corneal epithelium (at protein level).

Involved in corneal epithelium organization, integrity and corneal keratin expression. The polypeptide is Keratin, type I cytoskeletal 12 (KRT12) (Homo sapiens (Human)).